The primary structure comprises 110 residues: Large ribosomal subunit protein uL22 (110 aa).

The protein belongs to the universal ribosomal protein uL22 family. As to quaternary structure, part of the 50S ribosomal subunit.

In terms of biological role, this protein binds specifically to 23S rRNA; its binding is stimulated by other ribosomal proteins, e.g. L4, L17, and L20. It is important during the early stages of 50S assembly. It makes multiple contacts with different domains of the 23S rRNA in the assembled 50S subunit and ribosome. Functionally, the globular domain of the protein is located near the polypeptide exit tunnel on the outside of the subunit, while an extended beta-hairpin is found that lines the wall of the exit tunnel in the center of the 70S ribosome. The chain is Large ribosomal subunit protein uL22 from Citrobacter koseri (strain ATCC BAA-895 / CDC 4225-83 / SGSC4696).